The chain runs to 383 residues: Na(+)/H(+) antiporter NhaA (383 aa).

The next 11 membrane-spanning stretches (helical) occupy residues Leu10–Pro30, Leu56–Ile76, Ile91–Ser111, Gly121–Gly141, Leu150–Phe170, Ser174–Asn194, Val206–Ala226, Pro254–Ser274, Ile289–Phe308, Gly327–Phe347, and Ala355–Leu375.

This sequence belongs to the NhaA Na(+)/H(+) (TC 2.A.33) antiporter family.

The protein localises to the cell inner membrane. The catalysed reaction is Na(+)(in) + 2 H(+)(out) = Na(+)(out) + 2 H(+)(in). Its function is as follows. Na(+)/H(+) antiporter that extrudes sodium in exchange for external protons. This chain is Na(+)/H(+) antiporter NhaA, found in Francisella tularensis subsp. tularensis (strain WY96-3418).